The chain runs to 337 residues: Peptide methionine sulfoxide reductase MsrA/MsrB (337 aa).

Residues 28-181 (KDIYLAGGCF…PGGYCHVDLS (154 aa)) are peptide methionine sulfoxide reductase A. Residue Cys-36 is part of the active site. Residues 198–321 (KDELKAKLSD…NGASLKFIPL (124 aa)) form the MsrB domain. Cys-310 serves as the catalytic Nucleophile.

In the N-terminal section; belongs to the MsrA Met sulfoxide reductase family. This sequence in the C-terminal section; belongs to the MsrB Met sulfoxide reductase family.

It catalyses the reaction L-methionyl-[protein] + [thioredoxin]-disulfide + H2O = L-methionyl-(S)-S-oxide-[protein] + [thioredoxin]-dithiol. It carries out the reaction [thioredoxin]-disulfide + L-methionine + H2O = L-methionine (S)-S-oxide + [thioredoxin]-dithiol. The catalysed reaction is L-methionyl-[protein] + [thioredoxin]-disulfide + H2O = L-methionyl-(R)-S-oxide-[protein] + [thioredoxin]-dithiol. Has an important function as a repair enzyme for proteins that have been inactivated by oxidation. Catalyzes the reversible oxidation-reduction of methionine sulfoxide in proteins to methionine. The polypeptide is Peptide methionine sulfoxide reductase MsrA/MsrB (msrAB) (Campylobacter fetus).